The primary structure comprises 331 residues: Protein FLX-like 1 (331 aa).

Residues Met1–Ser51 are disordered. Residues Ile69 to Ala252 are a coiled coil. Residues Gln306–Gln321 show a composition bias toward low complexity. The interval Gln306 to Arg331 is disordered. Over residues Gln322 to Arg331 the composition is skewed to pro residues.

The protein belongs to the FLX family. Interacts with FRI.

Functionally, has no transcriptional activation activity. The sequence is that of Protein FLX-like 1 (FLXL1) from Arabidopsis thaliana (Mouse-ear cress).